The following is a 129-amino-acid chain: Large ribosomal subunit protein uL22 (129 aa).

Belongs to the universal ribosomal protein uL22 family. As to quaternary structure, part of the 50S ribosomal subunit.

Functionally, this protein binds specifically to 23S rRNA; its binding is stimulated by other ribosomal proteins, e.g. L4, L17, and L20. It is important during the early stages of 50S assembly. It makes multiple contacts with different domains of the 23S rRNA in the assembled 50S subunit and ribosome. The globular domain of the protein is located near the polypeptide exit tunnel on the outside of the subunit, while an extended beta-hairpin is found that lines the wall of the exit tunnel in the center of the 70S ribosome. The protein is Large ribosomal subunit protein uL22 of Rhizobium etli (strain ATCC 51251 / DSM 11541 / JCM 21823 / NBRC 15573 / CFN 42).